We begin with the raw amino-acid sequence, 86 residues long: Large ribosomal subunit protein uL10 (86 aa).

Belongs to the universal ribosomal protein uL10 family. As to quaternary structure, part of the ribosomal stalk of the 50S ribosomal subunit. The N-terminus interacts with L11 and the large rRNA to form the base of the stalk. The C-terminus forms an elongated spine to which L12 dimers bind in a sequential fashion forming a multimeric L10(L12)X complex.

Its function is as follows. Forms part of the ribosomal stalk, playing a central role in the interaction of the ribosome with GTP-bound translation factors. In Serratia marcescens, this protein is Large ribosomal subunit protein uL10 (rplJ).